We begin with the raw amino-acid sequence, 597 residues long: MTGANSLQRLDWRNLNTLWGSILAETLSRLGCRVAVVCPGSRSAPLTYALAQHPEIEAIPAVDERSAAFFALGLAQQTRQPIPLVCTSGSAGAHFFPALIEAAESGWPLLVLTADRPPELRHCRAGQTIDQVKLYGHYPNWQAELALPSADLEALAYLRQMIIHAWERALYPFPGPVHLNVPLRDPLAPVADGSTAPLVHLQEDPEFEKTFFRGVISPSGLVTPAGGSAFASTASFWREWCGCERGVILAGPAQPADPQRYAEAVARLALALGWPVLAEGLSPLRNYASLNPYLITTYDFLLQGEQPPLWPEQVIQLGSLPTSKALRQTLAQARPRTWLLDPRAQNADPLHNPTTHLPFVVEEVAAGIPAGKAKATAFLQTWLRAEAKARAELDRLLADLPEWFEGKLAWWLAHHLPPETPLFIANSTPVRDVEWFWPPNDRRIRPYFNRGTNGIDGILSTAFGVAYRHRPTVLLTGDLAFLHDCGGLRLAQCLQGSLTILLINNQGGGIFELLPIAEAGPPFEPYFATPQAVDFALLCQAHGIPHRRIETWEELAQALDPLPAQGVRVLEILTDRRADARRRQEWFRRWSELPSTL.

Belongs to the TPP enzyme family. MenD subfamily. As to quaternary structure, homodimer. Mg(2+) serves as cofactor. Requires Mn(2+) as cofactor. The cofactor is thiamine diphosphate.

It catalyses the reaction isochorismate + 2-oxoglutarate + H(+) = 5-enolpyruvoyl-6-hydroxy-2-succinyl-cyclohex-3-ene-1-carboxylate + CO2. The protein operates within quinol/quinone metabolism; 1,4-dihydroxy-2-naphthoate biosynthesis; 1,4-dihydroxy-2-naphthoate from chorismate: step 2/7. Its pathway is cofactor biosynthesis; phylloquinone biosynthesis. Catalyzes the thiamine diphosphate-dependent decarboxylation of 2-oxoglutarate and the subsequent addition of the resulting succinic semialdehyde-thiamine pyrophosphate anion to isochorismate to yield 2-succinyl-5-enolpyruvyl-6-hydroxy-3-cyclohexene-1-carboxylate (SEPHCHC). In Synechococcus sp. (strain JA-3-3Ab) (Cyanobacteria bacterium Yellowstone A-Prime), this protein is 2-succinyl-5-enolpyruvyl-6-hydroxy-3-cyclohexene-1-carboxylate synthase.